Reading from the N-terminus, the 222-residue chain is 26S proteasome non-ATPase regulatory subunit 9 (222 aa).

One can recognise a PDZ domain in the interval 108–194; sequence QARDMAEARE…KPLNVTVIRR (87 aa). The residue at position 128 (S128) is a Phosphoserine.

This sequence belongs to the proteasome subunit p27 family. In terms of assembly, interacts with PSMC3. Part of a transient complex (modulator) containing PSMD9, PSMC6 and PSMC3 formed during the assembly of the 26S proteasome.

Acts as a chaperone during the assembly of the 26S proteasome, specifically of the base subcomplex of the PA700/19S regulatory complex (RC). During the base subcomplex assembly is part of an intermediate PSMD9:PSMC6:PSMC3 module, also known as modulator trimer complex; PSMD9 is released during the further base assembly process. The polypeptide is 26S proteasome non-ATPase regulatory subunit 9 (Psmd9) (Mus musculus (Mouse)).